A 103-amino-acid chain; its full sequence is Defensin-like protein 289 (103 aa).

Residues methionine 1–alanine 29 form the signal peptide. Intrachain disulfides connect cysteine 33–cysteine 50, cysteine 39–cysteine 55, cysteine 43–cysteine 57, cysteine 72–cysteine 92, cysteine 78–cysteine 98, and cysteine 84–cysteine 100.

This sequence belongs to the DEFL family.

It localises to the secreted. The sequence is that of Defensin-like protein 289 from Arabidopsis thaliana (Mouse-ear cress).